Consider the following 179-residue polypeptide: Large ribosomal subunit protein uL5 (179 aa).

The protein belongs to the universal ribosomal protein uL5 family. Part of the 50S ribosomal subunit; part of the 5S rRNA/L5/L18/L25 subcomplex. Contacts the 5S rRNA and the P site tRNA. Forms a bridge to the 30S subunit in the 70S ribosome.

This is one of the proteins that bind and probably mediate the attachment of the 5S RNA into the large ribosomal subunit, where it forms part of the central protuberance. In the 70S ribosome it contacts protein S13 of the 30S subunit (bridge B1b), connecting the 2 subunits; this bridge is implicated in subunit movement. Contacts the P site tRNA; the 5S rRNA and some of its associated proteins might help stabilize positioning of ribosome-bound tRNAs. The chain is Large ribosomal subunit protein uL5 from Synechococcus sp. (strain CC9605).